A 90-amino-acid chain; its full sequence is Small ribosomal subunit protein bS18 (90 aa).

It belongs to the bacterial ribosomal protein bS18 family. Part of the 30S ribosomal subunit. Forms a tight heterodimer with protein bS6.

Binds as a heterodimer with protein bS6 to the central domain of the 16S rRNA, where it helps stabilize the platform of the 30S subunit. The chain is Small ribosomal subunit protein bS18 from Polynucleobacter asymbioticus (strain DSM 18221 / CIP 109841 / QLW-P1DMWA-1) (Polynucleobacter necessarius subsp. asymbioticus).